Reading from the N-terminus, the 426-residue chain is Histidine--tRNA ligase (426 aa).

It belongs to the class-II aminoacyl-tRNA synthetase family. In terms of assembly, homodimer.

Its subcellular location is the cytoplasm. It catalyses the reaction tRNA(His) + L-histidine + ATP = L-histidyl-tRNA(His) + AMP + diphosphate + H(+). The sequence is that of Histidine--tRNA ligase from Corynebacterium kroppenstedtii (strain DSM 44385 / JCM 11950 / CIP 105744 / CCUG 35717).